The following is an 88-amino-acid chain: MRLFLSLPVLVVVLAMVLEGPAPAQAAPEISSTLERIPDKLKEFGNTLENKARAAIESIKQSDLPAKTRNWFSETFNKVKEQLKTTFS.

Positions 1-26 (MRLFLSLPVLVVVLAMVLEGPAPAQA) are cleaved as a signal peptide.

The protein belongs to the apolipoprotein C1 family.

The protein localises to the secreted. Its function is as follows. Inhibitor of lipoprotein binding to the low density lipoprotein (LDL) receptor, LDL receptor-related protein, and very low density lipoprotein (VLDL) receptor. Associates with high density lipoproteins (HDL) and the triacylglycerol-rich lipoproteins in the plasma and makes up about 10% of the protein of the VLDL and 2% of that of HDL. Appears to interfere directly with fatty acid uptake and is also the major plasma inhibitor of cholesteryl ester transfer protein (CETP). Binds free fatty acids and reduces their intracellular esterification. Modulates the interaction of APOE with beta-migrating VLDL and inhibits binding of beta-VLDL to the LDL receptor-related protein. This is Apolipoprotein C-I (APOC1) from Arctocephalus gazella (Antarctic fur seal).